Reading from the N-terminus, the 487-residue chain is Cysteine--tRNA ligase (487 aa).

C29 is a binding site for Zn(2+). Positions 31-41 match the 'HIGH' region motif; that stretch reads VTVYDFCHIGH. Zn(2+) contacts are provided by C209, H234, and E238. Residues 266–270 carry the 'KMSKS' region motif; it reads KMSKS. K269 serves as a coordination point for ATP.

The protein belongs to the class-I aminoacyl-tRNA synthetase family. In terms of assembly, monomer. Zn(2+) is required as a cofactor.

The protein localises to the cytoplasm. The catalysed reaction is tRNA(Cys) + L-cysteine + ATP = L-cysteinyl-tRNA(Cys) + AMP + diphosphate. The chain is Cysteine--tRNA ligase from Trichlorobacter lovleyi (strain ATCC BAA-1151 / DSM 17278 / SZ) (Geobacter lovleyi).